A 66-amino-acid chain; its full sequence is Large ribosomal subunit protein bL35 (66 aa).

A compositionally biased stretch (basic residues) spans 1–16 (MPKQKTHRASAKRFKR). Residues 1–21 (MPKQKTHRASAKRFKRTGSGG) are disordered.

The protein belongs to the bacterial ribosomal protein bL35 family.

The polypeptide is Large ribosomal subunit protein bL35 (Streptococcus gordonii (strain Challis / ATCC 35105 / BCRC 15272 / CH1 / DL1 / V288)).